An 85-amino-acid chain; its full sequence is Small ribosomal subunit protein bS18 (85 aa).

Belongs to the bacterial ribosomal protein bS18 family. As to quaternary structure, part of the 30S ribosomal subunit. Forms a tight heterodimer with protein bS6.

In terms of biological role, binds as a heterodimer with protein bS6 to the central domain of the 16S rRNA, where it helps stabilize the platform of the 30S subunit. The polypeptide is Small ribosomal subunit protein bS18 (Helicobacter pylori (strain Shi470)).